We begin with the raw amino-acid sequence, 255 residues long: MSSNKASFFTRLRRLCRLTVWLFKTGKNLRGIDGGCPKSRNRAVIALGKGALAALDIGLEVGRPAPEHPNGVLVAANHVSWLDIFAMSAVYPSSFIAKQEIKSWPVLGKMGQNAGTVFINRNSRRDIEPINRAVCETLQRGQNVSFFPEARTSSGLGLLPFKAALFQSAIDAGAKVLAVALRYYDETGKRTARPSYADVGLPTCLWRIVSMKKLTIKVDFVCVADAAESEDRYALKDKIEESIRAVVADDADIAV.

The HXXXXD motif signature appears at 78–83 (HVSWLD).

Belongs to the 1-acyl-sn-glycerol-3-phosphate acyltransferase family.

Its subcellular location is the cell inner membrane. The enzyme catalyses a 1-acyl-sn-glycero-3-phosphate + an acyl-CoA = a 1,2-diacyl-sn-glycero-3-phosphate + CoA. It participates in phospholipid metabolism; CDP-diacylglycerol biosynthesis; CDP-diacylglycerol from sn-glycerol 3-phosphate: step 2/3. Converts lysophosphatidic acid (LPA) into phosphatidic acid by incorporating acyl moiety at the 2 position. In Neisseria gonorrhoeae, this protein is 1-acyl-sn-glycerol-3-phosphate acyltransferase (plsC).